A 413-amino-acid chain; its full sequence is Phosphoribosylamine--glycine ligase (413 aa).

Residues 108 to 310 (KQLMDKYRIP…LMQLIIDLEN (203 aa)) form the ATP-grasp domain. Residue 134 to 190 (VETCDLPIVIKKDGLAAGKGVIIAFTREDALDGVKKIYQEEKGKVVFESYLEGEEFS) coordinates ATP. 2 residues coordinate Mg(2+): Glu280 and Asn282.

It belongs to the GARS family. Mg(2+) serves as cofactor. Requires Mn(2+) as cofactor.

It catalyses the reaction 5-phospho-beta-D-ribosylamine + glycine + ATP = N(1)-(5-phospho-beta-D-ribosyl)glycinamide + ADP + phosphate + H(+). It functions in the pathway purine metabolism; IMP biosynthesis via de novo pathway; N(1)-(5-phospho-D-ribosyl)glycinamide from 5-phospho-alpha-D-ribose 1-diphosphate: step 2/2. This is Phosphoribosylamine--glycine ligase from Staphylococcus epidermidis (strain ATCC 12228 / FDA PCI 1200).